We begin with the raw amino-acid sequence, 332 residues long: Ketol-acid reductoisomerase (NADP(+)) (332 aa).

The KARI N-terminal Rossmann domain occupies Ala-4–Thr-184. NADP(+)-binding positions include Tyr-27–Gln-30, Ser-53, Ser-55, and Asp-85–Gln-88. His-110 is an active-site residue. NADP(+) is bound at residue Gly-136. The KARI C-terminal knotted domain maps to Thr-185–Leu-330. Mg(2+)-binding residues include Asp-193, Glu-197, Glu-229, and Glu-233. Ser-254 is a binding site for substrate.

Belongs to the ketol-acid reductoisomerase family. It depends on Mg(2+) as a cofactor.

The enzyme catalyses (2R)-2,3-dihydroxy-3-methylbutanoate + NADP(+) = (2S)-2-acetolactate + NADPH + H(+). It catalyses the reaction (2R,3R)-2,3-dihydroxy-3-methylpentanoate + NADP(+) = (S)-2-ethyl-2-hydroxy-3-oxobutanoate + NADPH + H(+). It functions in the pathway amino-acid biosynthesis; L-isoleucine biosynthesis; L-isoleucine from 2-oxobutanoate: step 2/4. It participates in amino-acid biosynthesis; L-valine biosynthesis; L-valine from pyruvate: step 2/4. In terms of biological role, involved in the biosynthesis of branched-chain amino acids (BCAA). Catalyzes an alkyl-migration followed by a ketol-acid reduction of (S)-2-acetolactate (S2AL) to yield (R)-2,3-dihydroxy-isovalerate. In the isomerase reaction, S2AL is rearranged via a Mg-dependent methyl migration to produce 3-hydroxy-3-methyl-2-ketobutyrate (HMKB). In the reductase reaction, this 2-ketoacid undergoes a metal-dependent reduction by NADPH to yield (R)-2,3-dihydroxy-isovalerate. The chain is Ketol-acid reductoisomerase (NADP(+)) from Gloeobacter violaceus (strain ATCC 29082 / PCC 7421).